The sequence spans 24 residues: 29 kDa outer membrane protein (24 aa).

It is found in the cell outer membrane. In terms of biological role, may be involved in transporting molecules across the outer membrane. This Acinetobacter baumannii protein is 29 kDa outer membrane protein.